Here is a 163-residue protein sequence, read N- to C-terminus: uncharacterized protein (163 aa).

Positions 1 to 54 are disordered; it reads MGKSARLRRSQTSSPENVLLGKDSSDDPYRSDSETESNSSSGTESNMSSDSTTS. Positions 23–33 are enriched in basic and acidic residues; sequence DSSDDPYRSDS. Low complexity predominate over residues 36–52; it reads ESNSSSGTESNMSSDST. A coiled-coil region spans residues 69–143; it reads LRTELAEMEM…VEELESSTRE (75 aa).

This is an uncharacterized protein from Arabidopsis thaliana (Mouse-ear cress).